Reading from the N-terminus, the 142-residue chain is Large ribosomal subunit protein uL13 (142 aa).

The protein belongs to the universal ribosomal protein uL13 family. In terms of assembly, part of the 50S ribosomal subunit.

In terms of biological role, this protein is one of the early assembly proteins of the 50S ribosomal subunit, although it is not seen to bind rRNA by itself. It is important during the early stages of 50S assembly. This Shigella boydii serotype 18 (strain CDC 3083-94 / BS512) protein is Large ribosomal subunit protein uL13.